The primary structure comprises 347 residues: MIRVSIIGATGYTGIELVRLLANHPEVELSSLVSRNASNKPLSDIYPQFIGRIDLKFSEYDCQAICQNSDIVFTALPHGISQEIVGELYNCGVKIIDLSGDFRYKDSAIYEKWYRENHHYPHLLEKAVYGLVEINRNSIKRSSLVANPGCYPTASLLGLWPVISENLINLNTIIIDAKSGVSGAGKGLKRGSHFVEVDENIKGYSIGSHRHTSEIEEIIKTFSGNQKAIVSFTPHLVPMKRGILATIYVKLKQSISERALRELYHKYYPDHGFIKVLPRDIFPETKYVVGTNYCYIGLKYDTRTERLVIISAIDNLVKGAAGQAIQNMNVMFNLPEYMGLKQVGVFP.

Cys-150 is an active-site residue.

The protein belongs to the NAGSA dehydrogenase family. Type 1 subfamily.

Its subcellular location is the cytoplasm. The enzyme catalyses N-acetyl-L-glutamate 5-semialdehyde + phosphate + NADP(+) = N-acetyl-L-glutamyl 5-phosphate + NADPH + H(+). It functions in the pathway amino-acid biosynthesis; L-arginine biosynthesis; N(2)-acetyl-L-ornithine from L-glutamate: step 3/4. Its function is as follows. Catalyzes the NADPH-dependent reduction of N-acetyl-5-glutamyl phosphate to yield N-acetyl-L-glutamate 5-semialdehyde. This is N-acetyl-gamma-glutamyl-phosphate reductase from Halothermothrix orenii (strain H 168 / OCM 544 / DSM 9562).